The primary structure comprises 57 residues: Large ribosomal subunit protein bL32 (57 aa).

Positions 1–20 (MAVPKKKTSKTKRDQRKANW) are enriched in basic residues. Residues 1 to 21 (MAVPKKKTSKTKRDQRKANWK) form a disordered region.

This sequence belongs to the bacterial ribosomal protein bL32 family.

This Rippkaea orientalis (strain PCC 8801 / RF-1) (Cyanothece sp. (strain PCC 8801)) protein is Large ribosomal subunit protein bL32.